A 269-amino-acid polypeptide reads, in one-letter code: uncharacterized protein (269 aa).

Residues 5 to 73 form the HTH gntR-type domain; the sequence is APKWRELADR…RGHGTVVRRK (69 aa). The H-T-H motif DNA-binding region spans 33-52; it reads IRDLVEAGEGSKETVHRAYK.

In terms of biological role, the imp locus inhibits the extrachromosomal maintenance of the Streptomyces plasmid SLP1. This is an uncharacterized protein from Streptomyces coelicolor (strain ATCC BAA-471 / A3(2) / M145).